We begin with the raw amino-acid sequence, 405 residues long: Secreted aspartic protease 8 (405 aa).

Residues 1 to 23 (MVSIITFTKNVLVTLAFALLAQG) form the signal peptide. A propeptide spans 24–75 (LAIPEDIDKRAEKVVSLDFTVTRKPFNATAHGQHHQSQQQQQQQQQQPAQKR) (activation peptide). Residues 52–78 (TAHGQHHQSQQQQQQQQQQPAQKRGTV) are disordered. Positions 58–70 (HQSQQQQQQQQQQ) are enriched in low complexity. One can recognise a Peptidase A1 domain in the interval 89–392 (YAATITVGSN…DLDGNTISLA (304 aa)). The active site involves Asp-107. 107–109 (DTG) is a pepstatin A binding site. A disulfide bridge connects residues Cys-122 and Cys-134. Pepstatin A contacts are provided by residues 160 to 161 (ED) and 292 to 296 (DSGTT). Residue Asp-292 is part of the active site. Cys-327 and Cys-358 form a disulfide bridge.

This sequence belongs to the peptidase A1 family. As to quaternary structure, monomer.

It localises to the secreted. The catalysed reaction is Preferential cleavage at the carboxyl of hydrophobic amino acids, but fails to cleave 15-Leu-|-Tyr-16, 16-Tyr-|-Leu-17 and 24-Phe-|-Phe-25 of insulin B chain. Activates trypsinogen, and degrades keratin.. Its function is as follows. Secreted aspartic peptidases (SAPs) are a group of ten acidic hydrolases considered as key virulence factors. These enzymes supply the fungus with nutrient amino acids as well as are able to degrade the selected host's proteins involved in the immune defense. Moreover, acts toward human hemoglobin though limited proteolysis to generate a variety of antimicrobial hemocidins, enabling to compete with the other microorganisms of the same physiological niche using the microbicidal peptides generated from the host protein. In terms of biological role, plays a key role in defense against host by cleaving histatin-5 (Hst 5), a peptide from human saliva that carries out fungicidal activity. The cleavage rate decreases in an order of SAP2 &gt; SAP9 &gt; SAP3 &gt; SAP7 &gt; SAP4 &gt; SAP1 &gt; SAP8. The hydrolysis of Hst 5 by SAP8 causes production of the DSHAKRHHGY, HHSHRGY and FHEKHHSHRGY peptides. In Candida albicans (strain SC5314 / ATCC MYA-2876) (Yeast), this protein is Secreted aspartic protease 8.